The primary structure comprises 647 residues: Threonine--tRNA ligase (647 aa).

Residues 1-61 enclose the TGS domain; sequence MIKITFPDGA…EEDGSIEIVT (61 aa). The catalytic stretch occupies residues 240 to 538; it reads DHRKLGKELD…LIETYKGAFP (299 aa). Cys334, His385, and His515 together coordinate Zn(2+).

Belongs to the class-II aminoacyl-tRNA synthetase family. As to quaternary structure, homodimer. Requires Zn(2+) as cofactor.

Its subcellular location is the cytoplasm. It catalyses the reaction tRNA(Thr) + L-threonine + ATP = L-threonyl-tRNA(Thr) + AMP + diphosphate + H(+). Catalyzes the attachment of threonine to tRNA(Thr) in a two-step reaction: L-threonine is first activated by ATP to form Thr-AMP and then transferred to the acceptor end of tRNA(Thr). Also edits incorrectly charged L-seryl-tRNA(Thr). The chain is Threonine--tRNA ligase from Streptococcus pyogenes serotype M2 (strain MGAS10270).